A 546-amino-acid polypeptide reads, in one-letter code: uncharacterized protein (546 aa).

Belongs to the IIV-6 098R family.

This is an uncharacterized protein from Aedes vexans (Inland floodwater mosquito).